The primary structure comprises 245 residues: Probable phosphatase YpAngola_A2446 (245 aa).

Residues H7, H9, H15, H40, E73, H101, H131, D192, and H194 each coordinate Zn(2+).

Belongs to the PHP family. Homotrimer. Zn(2+) serves as cofactor.

The chain is Probable phosphatase YpAngola_A2446 from Yersinia pestis bv. Antiqua (strain Angola).